We begin with the raw amino-acid sequence, 682 residues long: Potassium-transporting ATPase ATP-binding subunit (682 aa).

The next 4 membrane-spanning stretches (helical) occupy residues 34 to 54 (PVMF…IAMA), 62 to 82 (ALFS…ANFA), 219 to 239 (IALT…TATL), and 254 to 274 (VLVA…LSAI). The active-site 4-aspartylphosphate intermediate is the aspartate 307. ATP-binding positions include aspartate 344, glutamate 348, 377–384 (FTAQSRMS), and lysine 395. Positions 518 and 522 each coordinate Mg(2+). 3 helical membrane passes run 588 to 608 (FAII…LNIM), 616 to 636 (AILS…PLAL), and 656 to 676 (IYGL…DLLL).

This sequence belongs to the cation transport ATPase (P-type) (TC 3.A.3) family. Type IA subfamily. As to quaternary structure, the system is composed of three essential subunits: KdpA, KdpB and KdpC.

The protein resides in the cell inner membrane. The catalysed reaction is K(+)(out) + ATP + H2O = K(+)(in) + ADP + phosphate + H(+). In terms of biological role, part of the high-affinity ATP-driven potassium transport (or Kdp) system, which catalyzes the hydrolysis of ATP coupled with the electrogenic transport of potassium into the cytoplasm. This subunit is responsible for energy coupling to the transport system and for the release of the potassium ions to the cytoplasm. This Shigella boydii serotype 4 (strain Sb227) protein is Potassium-transporting ATPase ATP-binding subunit.